Reading from the N-terminus, the 199-residue chain is Prolactin-1 (199 aa).

Intrachain disulfides connect Cys-4–Cys-11, Cys-58–Cys-174, and Cys-191–Cys-199. N-linked (GlcNAc...) asparagine glycosylation is present at Asn-60.

The protein belongs to the somatotropin/prolactin family. Post-translationally, glycosylated.

The protein resides in the secreted. The chain is Prolactin-1 from Crocodylus novaeguineae (Crocodile).